Here is a 134-residue protein sequence, read N- to C-terminus: Proline-rich nuclear receptor coactivator 2 (134 aa).

Residues 1 to 74 form a disordered region; it reads MGGGERYNIP…NNSNWNASLS (74 aa). Composition is skewed to polar residues over residues 11 to 24 and 52 to 61; these read DPQS…QQQH and SAVQNGGKTK. The span at 62-74 shows a compositional bias: low complexity; sequence SLSNNSNWNASLS. The SH3-binding signature appears at 94–100; the sequence is SEPPSPS.

This sequence belongs to the PNRC family. PNRC2 subfamily. In terms of assembly, interacts with UPF1/RENT1; preferentially interacts with hyperphosphorylated form. Interacts with DCP1A. Interacts with many nuclear receptors including ESR1, ESRRA, ESRRG, NR3C1/GR, NR5A1, PGR, TR, RAR and RXR.

It localises to the nucleus. It is found in the cytoplasm. The protein resides in the P-body. Its function is as follows. Involved in nonsense-mediated mRNA decay (NMD) by acting as a bridge between the mRNA decapping complex and the NMD machinery. May act by targeting the NMD machinery to the P-body and recruiting the decapping machinery to aberrant mRNAs. Required for UPF1/RENT1 localization to the P-body. Plays a role in glucocorticoid receptor-mediated mRNA degradation by interacting with the glucocorticoid receptor NR3C1 in a ligand-dependent manner when it is bound to the 5' UTR of target mRNAs and recruiting the RNA helicase UPF1 and the mRNA-decapping enzyme DCP1A, leading to RNA decay. Also acts as a nuclear receptor coactivator. May play a role in controlling the energy balance between energy storage and energy expenditure. In Rattus norvegicus (Rat), this protein is Proline-rich nuclear receptor coactivator 2 (Pnrc2).